The sequence spans 114 residues: UPF0145 protein TTHA1944 (114 aa).

It belongs to the UPF0145 family.

In Thermus thermophilus (strain ATCC 27634 / DSM 579 / HB8), this protein is UPF0145 protein TTHA1944.